Reading from the N-terminus, the 359-residue chain is MENKKVIVGISGGVDSSVSALLLKQQGYDVTGVFMKNWEEDDTDEFCSAEQDIADAQAVCDSIGIPFKKINFTAEYWDNVFEHFLIEYKAGRTPNPDILCNKEIKFKAFLSYVHLLGGDYIATGHYAQTRLAADGSVQLVKGLDDNKDQTYFLYTLGQEQLRQTIFPIGNIEKSKVREIAKENNLVTFDKKDSTGICFIGERKFKEFLSKYLPAQKGEIHDENGIKIGMHDGLMYYTIGQRQGLGIGGVKDRPEVPWFAAKKDLENNVLIAVQGHDHPLLFKQSLQAIELSWVAGMAPADKFRCAAKVRYRQKDQSCEVEVNQDGSVNVTFDQPQRAITPGQSVVFYIDDVCLGGGVII.

ATP is bound by residues 9–16 (GISGGVDS) and Met35. Residues 95-97 (NPD) form an interaction with target base in tRNA region. Cys100 (nucleophile) is an active-site residue. A disulfide bridge links Cys100 with Cys197. Gly124 contributes to the ATP binding site. Residues 147–149 (KDQ) are interaction with tRNA. Cys197 serves as the catalytic Cysteine persulfide intermediate. An interaction with tRNA region spans residues 309–310 (RY).

It belongs to the MnmA/TRMU family.

It is found in the cytoplasm. The catalysed reaction is S-sulfanyl-L-cysteinyl-[protein] + uridine(34) in tRNA + AH2 + ATP = 2-thiouridine(34) in tRNA + L-cysteinyl-[protein] + A + AMP + diphosphate + H(+). Its function is as follows. Catalyzes the 2-thiolation of uridine at the wobble position (U34) of tRNA, leading to the formation of s(2)U34. The chain is tRNA-specific 2-thiouridylase MnmA from Francisella tularensis subsp. holarctica (strain FTNF002-00 / FTA).